We begin with the raw amino-acid sequence, 430 residues long: Ribosomal protein uS12 methylthiotransferase RimO (430 aa).

One can recognise an MTTase N-terminal domain in the interval methionine 1 to aspartate 116. 6 residues coordinate [4Fe-4S] cluster: cysteine 10, cysteine 46, cysteine 79, cysteine 148, cysteine 152, and cysteine 155. Residues leucine 134–arginine 365 form the Radical SAM core domain. Residues aspartate 367–isoleucine 430 enclose the TRAM domain.

It belongs to the methylthiotransferase family. RimO subfamily. [4Fe-4S] cluster is required as a cofactor.

The protein localises to the cytoplasm. The enzyme catalyses L-aspartate(89)-[ribosomal protein uS12]-hydrogen + (sulfur carrier)-SH + AH2 + 2 S-adenosyl-L-methionine = 3-methylsulfanyl-L-aspartate(89)-[ribosomal protein uS12]-hydrogen + (sulfur carrier)-H + 5'-deoxyadenosine + L-methionine + A + S-adenosyl-L-homocysteine + 2 H(+). Its function is as follows. Catalyzes the methylthiolation of an aspartic acid residue of ribosomal protein uS12. In Thermotoga petrophila (strain ATCC BAA-488 / DSM 13995 / JCM 10881 / RKU-1), this protein is Ribosomal protein uS12 methylthiotransferase RimO.